Here is a 274-residue protein sequence, read N- to C-terminus: Large ribosomal subunit protein uL2 (274 aa).

Residues 223–258 form a disordered region; sequence VAMNPVDHPHGGGEGRTSGGRHPVTPWGIPTKGYKT.

It belongs to the universal ribosomal protein uL2 family. In terms of assembly, part of the 50S ribosomal subunit. Forms a bridge to the 30S subunit in the 70S ribosome.

Its function is as follows. One of the primary rRNA binding proteins. Required for association of the 30S and 50S subunits to form the 70S ribosome, for tRNA binding and peptide bond formation. It has been suggested to have peptidyltransferase activity; this is somewhat controversial. Makes several contacts with the 16S rRNA in the 70S ribosome. The protein is Large ribosomal subunit protein uL2 of Geotalea daltonii (strain DSM 22248 / JCM 15807 / FRC-32) (Geobacter daltonii).